Reading from the N-terminus, the 265-residue chain is Hydroxyethylthiazole kinase (265 aa).

Methionine 50 serves as a coordination point for substrate. Positions 125 and 171 each coordinate ATP. Residue glycine 198 coordinates substrate.

It belongs to the Thz kinase family. It depends on Mg(2+) as a cofactor.

The enzyme catalyses 5-(2-hydroxyethyl)-4-methylthiazole + ATP = 4-methyl-5-(2-phosphooxyethyl)-thiazole + ADP + H(+). The protein operates within cofactor biosynthesis; thiamine diphosphate biosynthesis; 4-methyl-5-(2-phosphoethyl)-thiazole from 5-(2-hydroxyethyl)-4-methylthiazole: step 1/1. Catalyzes the phosphorylation of the hydroxyl group of 4-methyl-5-beta-hydroxyethylthiazole (THZ). This is Hydroxyethylthiazole kinase from Salmonella typhimurium (strain LT2 / SGSC1412 / ATCC 700720).